The primary structure comprises 453 residues: Ribulose bisphosphate carboxylase large chain (453 aa).

The propeptide occupies 1 to 2; it reads MS. At Pro3 the chain carries N-acetylproline. Lys14 carries the N6,N6,N6-trimethyllysine modification. Asn123 and Thr173 together coordinate substrate. Lys175 acts as the Proton acceptor in catalysis. Residue Lys177 participates in substrate binding. Lys201, Asp203, and Glu204 together coordinate Mg(2+). The residue at position 201 (Lys201) is an N6-carboxylysine. Catalysis depends on His294, which acts as the Proton acceptor. Residues Arg295, His327, and Ser379 each coordinate substrate.

This sequence belongs to the RuBisCO large chain family. Type I subfamily. Heterohexadecamer of 8 large chains and 8 small chains; disulfide-linked. The disulfide link is formed within the large subunit homodimers. Mg(2+) is required as a cofactor. The disulfide bond which can form in the large chain dimeric partners within the hexadecamer appears to be associated with oxidative stress and protein turnover.

The protein localises to the plastid. The protein resides in the chloroplast. The enzyme catalyses 2 (2R)-3-phosphoglycerate + 2 H(+) = D-ribulose 1,5-bisphosphate + CO2 + H2O. It catalyses the reaction D-ribulose 1,5-bisphosphate + O2 = 2-phosphoglycolate + (2R)-3-phosphoglycerate + 2 H(+). Functionally, ruBisCO catalyzes two reactions: the carboxylation of D-ribulose 1,5-bisphosphate, the primary event in carbon dioxide fixation, as well as the oxidative fragmentation of the pentose substrate in the photorespiration process. Both reactions occur simultaneously and in competition at the same active site. The polypeptide is Ribulose bisphosphate carboxylase large chain (Galium aparine (Catchweed bedstraw)).